Reading from the N-terminus, the 576-residue chain is Sulfite reductase [NADPH] hemoprotein beta-component (576 aa).

Positions 434, 440, 479, and 483 each coordinate [4Fe-4S] cluster. Cysteine 483 is a siroheme binding site.

The protein belongs to the nitrite and sulfite reductase 4Fe-4S domain family. In terms of assembly, alpha(8)-beta(8). The alpha component is a flavoprotein, the beta component is a hemoprotein. Siroheme serves as cofactor. The cofactor is [4Fe-4S] cluster.

It catalyses the reaction hydrogen sulfide + 3 NADP(+) + 3 H2O = sulfite + 3 NADPH + 4 H(+). It functions in the pathway sulfur metabolism; hydrogen sulfide biosynthesis; hydrogen sulfide from sulfite (NADPH route): step 1/1. Functionally, component of the sulfite reductase complex that catalyzes the 6-electron reduction of sulfite to sulfide. This is one of several activities required for the biosynthesis of L-cysteine from sulfate. In Oceanobacillus iheyensis (strain DSM 14371 / CIP 107618 / JCM 11309 / KCTC 3954 / HTE831), this protein is Sulfite reductase [NADPH] hemoprotein beta-component.